Consider the following 309-residue polypeptide: Homoserine kinase (309 aa).

ATP is bound at residue 91 to 101 (PVGSGLGSSAC).

Belongs to the GHMP kinase family. Homoserine kinase subfamily.

The protein localises to the cytoplasm. It carries out the reaction L-homoserine + ATP = O-phospho-L-homoserine + ADP + H(+). Its pathway is amino-acid biosynthesis; L-threonine biosynthesis; L-threonine from L-aspartate: step 4/5. In terms of biological role, catalyzes the ATP-dependent phosphorylation of L-homoserine to L-homoserine phosphate. This chain is Homoserine kinase, found in Hamiltonella defensa subsp. Acyrthosiphon pisum (strain 5AT).